A 365-amino-acid polypeptide reads, in one-letter code: tRNA/tmRNA (uracil-C(5))-methyltransferase (365 aa).

5 residues coordinate S-adenosyl-L-methionine: Gln-189, Tyr-217, Asn-222, Glu-238, and Asp-298. Cys-323 serves as the catalytic Nucleophile. Glu-357 serves as the catalytic Proton acceptor.

This sequence belongs to the class I-like SAM-binding methyltransferase superfamily. RNA M5U methyltransferase family. TrmA subfamily.

It catalyses the reaction uridine(54) in tRNA + S-adenosyl-L-methionine = 5-methyluridine(54) in tRNA + S-adenosyl-L-homocysteine + H(+). It carries out the reaction uridine(341) in tmRNA + S-adenosyl-L-methionine = 5-methyluridine(341) in tmRNA + S-adenosyl-L-homocysteine + H(+). Functionally, dual-specificity methyltransferase that catalyzes the formation of 5-methyluridine at position 54 (m5U54) in all tRNAs, and that of position 341 (m5U341) in tmRNA (transfer-mRNA). The protein is tRNA/tmRNA (uracil-C(5))-methyltransferase of Shewanella sp. (strain ANA-3).